A 524-amino-acid chain; its full sequence is Beta-glucosidase 23 (524 aa).

The first 24 residues, M1 to A24, serve as a signal peptide directing secretion. Q54 is an a beta-D-glucoside binding site. The N-linked (GlcNAc...) asparagine glycan is linked to N60. Residues H157 and N202–E203 contribute to the a beta-D-glucoside site. Catalysis depends on E203, which acts as the Proton donor. A disulfide bridge connects residues C222 and C230. Positions 346 and 418 each coordinate a beta-D-glucoside. E418 (nucleophile) is an active-site residue. The N-linked (GlcNAc...) asparagine glycan is linked to N461. A beta-D-glucoside is bound by residues W468, E475–W476, and F484. An N-linked (GlcNAc...) asparagine glycan is attached at N494. A Prevents secretion from ER motif is present at residues K521–L524.

It belongs to the glycosyl hydrolase 1 family. Homodimers. Binds to the deubiquitinating enzyme AMSH3. The inactive form interacts with PBP1/JAL30 to form the PYK10 complex, at least composed of PYK10/BGLU23, BGLU21, BGLU22, JAL22, JAL23, PBP1/JAL30, PBP2/JAL31, JAL32, JAL33, JAL34, JAL35, GLL22 and GLL23. Post-translationally, forms interchain disulfide bonds. In terms of tissue distribution, expressed exclusively in roots.

The protein resides in the endoplasmic reticulum lumen. The catalysed reaction is Hydrolysis of terminal, non-reducing beta-D-glucosyl residues with release of beta-D-glucose.. With respect to regulation, activated by tissue damage and upon binding to PBP1 or PBP2. In terms of biological role, beta-D-glucosidase active on scopolin &gt; esculin &gt;&gt; 4-MU-glucoside &gt;&gt; DIMBOA-glucoside. No activity with pNP-glucoside, oNP-glucoside and sinigrin as substrates. May possess beta-D-fucosidase activity. Required for the beneficial interaction with the endophytic fungus P.indica. May participate in the control of root colonization by P.indica by repressing defense responses and modulating other responses required for a mutualistic interaction. The sequence is that of Beta-glucosidase 23 from Arabidopsis thaliana (Mouse-ear cress).